Here is a 592-residue protein sequence, read N- to C-terminus: Arginine--tRNA ligase (592 aa).

Positions 128-138 match the 'HIGH' region motif; sequence ANPTGPLHVGH.

It belongs to the class-I aminoacyl-tRNA synthetase family. Monomer.

Its subcellular location is the cytoplasm. It catalyses the reaction tRNA(Arg) + L-arginine + ATP = L-arginyl-tRNA(Arg) + AMP + diphosphate. The sequence is that of Arginine--tRNA ligase from Hydrogenovibrio crunogenus (strain DSM 25203 / XCL-2) (Thiomicrospira crunogena).